Consider the following 335-residue polypeptide: Protein-arginine kinase (335 aa).

In terms of domain architecture, Phosphagen kinase C-terminal spans 21–244 (IVMSSRIRLA…NQIIHEEKQI (224 aa)). ATP contacts are provided by residues 24–28 (SSRIR), His-82, Arg-115, 166–170 (RASVM), and 197–202 (RGIYGE).

This sequence belongs to the ATP:guanido phosphotransferase family.

The enzyme catalyses L-arginyl-[protein] + ATP = N(omega)-phospho-L-arginyl-[protein] + ADP + H(+). In terms of biological role, catalyzes the specific phosphorylation of arginine residues in proteins. This chain is Protein-arginine kinase, found in Staphylococcus aureus (strain USA300).